The following is a 440-amino-acid chain: UDP-glycosyltransferase 87A1 (440 aa).

Residues Ser263, 312–314 (CDQ), 329–337 (HCGYNSTLE), and 351–354 (FWDQ) contribute to the UDP-alpha-D-glucose site.

The protein belongs to the UDP-glycosyltransferase family.

The polypeptide is UDP-glycosyltransferase 87A1 (UGT87A1) (Arabidopsis thaliana (Mouse-ear cress)).